A 484-amino-acid polypeptide reads, in one-letter code: T-complex protein 1 subunit delta (484 aa).

The protein belongs to the TCP-1 chaperonin family. In terms of assembly, component of the T-complex protein 1 (TCP1) complex.

It localises to the cytoplasm. In terms of biological role, molecular chaperone; assists the folding of proteins upon ATP hydrolysis. The polypeptide is T-complex protein 1 subunit delta (CCT4) (Encephalitozoon cuniculi (strain GB-M1) (Microsporidian parasite)).